The primary structure comprises 157 residues: S-ribosylhomocysteine lyase (157 aa).

3 residues coordinate Fe cation: H54, H58, and C124.

This sequence belongs to the LuxS family. In terms of assembly, homodimer. The cofactor is Fe cation.

The catalysed reaction is S-(5-deoxy-D-ribos-5-yl)-L-homocysteine = (S)-4,5-dihydroxypentane-2,3-dione + L-homocysteine. Involved in the synthesis of autoinducer 2 (AI-2) which is secreted by bacteria and is used to communicate both the cell density and the metabolic potential of the environment. The regulation of gene expression in response to changes in cell density is called quorum sensing. Catalyzes the transformation of S-ribosylhomocysteine (RHC) to homocysteine (HC) and 4,5-dihydroxy-2,3-pentadione (DPD). The polypeptide is S-ribosylhomocysteine lyase (Pediococcus pentosaceus (strain ATCC 25745 / CCUG 21536 / LMG 10740 / 183-1w)).